A 263-amino-acid polypeptide reads, in one-letter code: Proteasome subunit alpha type-1 (263 aa).

M1 carries the N-acetylmethionine modification. S110 is modified (phosphoserine; alternate). An O-linked (GlcNAc) serine; alternate glycan is attached at S110. K115 is covalently cross-linked (Glycyl lysine isopeptide (Lys-Gly) (interchain with G-Cter in ubiquitin)). S177 carries the phosphoserine modification. K208 participates in a covalent cross-link: Glycyl lysine isopeptide (Lys-Gly) (interchain with G-Cter in ubiquitin). The disordered stretch occupies residues 232-263; the sequence is FLEGLEERPQRKAQPAQPADEPAEKADEPMEH. Over residues 253–263 the composition is skewed to basic and acidic residues; it reads PAEKADEPMEH.

It belongs to the peptidase T1A family. The 26S proteasome consists of a 20S proteasome core and two 19S regulatory subunits. The 20S proteasome core is a barrel-shaped complex made of 28 subunits that are arranged in four stacked rings. The two outer rings are each formed by seven alpha subunits, and the two inner rings are formed by seven beta subunits. The proteolytic activity is exerted by three beta-subunits PSMB5, PSMB6 and PSMB7. Interacts with NOTCH3. Interacts with ZFAND1.

It localises to the cytoplasm. The protein resides in the nucleus. Component of the 20S core proteasome complex involved in the proteolytic degradation of most intracellular proteins. This complex plays numerous essential roles within the cell by associating with different regulatory particles. Associated with two 19S regulatory particles, forms the 26S proteasome and thus participates in the ATP-dependent degradation of ubiquitinated proteins. The 26S proteasome plays a key role in the maintenance of protein homeostasis by removing misfolded or damaged proteins that could impair cellular functions, and by removing proteins whose functions are no longer required. Associated with the PA200 or PA28, the 20S proteasome mediates ubiquitin-independent protein degradation. This type of proteolysis is required in several pathways including spermatogenesis (20S-PA200 complex) or generation of a subset of MHC class I-presented antigenic peptides (20S-PA28 complex). This chain is Proteasome subunit alpha type-1, found in Homo sapiens (Human).